A 59-amino-acid chain; its full sequence is Dimethylamine corrinoid protein (59 aa).

In terms of domain architecture, B12-binding spans 1-59; the sequence is TLQGQKDVIELLKEEGLRDKIKVMVGGAPATQAWADKIGADCYAENASEAVAKAKELLA.

Belongs to the methylamine corrinoid protein family.

Its pathway is one-carbon metabolism; methanogenesis from dimethylamine. Acts as a methyl group carrier between MtbB and MtbA. The protein is Dimethylamine corrinoid protein (mtbC) of Methanosarcina thermophila.